The primary structure comprises 300 residues: Protoheme IX farnesyltransferase (300 aa).

9 helical membrane passes run 21–43 (PRVV…RGVP), 45–65 (PLSV…AGAF), 94–114 (ASLI…LLFV), 117–137 (LSAL…SIVL), 145–167 (IVWG…TGSI), 171–193 (AIVL…SIHY), 213–233 (LVVL…LLLI), 235–255 (VAHM…WFVY), and 272–292 (AMHI…SVGI).

Belongs to the UbiA prenyltransferase family. Protoheme IX farnesyltransferase subfamily.

The protein localises to the cell membrane. The enzyme catalyses heme b + (2E,6E)-farnesyl diphosphate + H2O = Fe(II)-heme o + diphosphate. It participates in porphyrin-containing compound metabolism; heme O biosynthesis; heme O from protoheme: step 1/1. Its function is as follows. Converts heme B (protoheme IX) to heme O by substitution of the vinyl group on carbon 2 of heme B porphyrin ring with a hydroxyethyl farnesyl side group. This is Protoheme IX farnesyltransferase from Tropheryma whipplei (strain TW08/27) (Whipple's bacillus).